Reading from the N-terminus, the 142-residue chain is Large ribosomal subunit protein uL13 (142 aa).

Belongs to the universal ribosomal protein uL13 family. As to quaternary structure, part of the 50S ribosomal subunit.

This protein is one of the early assembly proteins of the 50S ribosomal subunit, although it is not seen to bind rRNA by itself. It is important during the early stages of 50S assembly. This chain is Large ribosomal subunit protein uL13, found in Pseudomonas fluorescens (strain Pf0-1).